A 947-amino-acid chain; its full sequence is Protein translocase subunit SecA 1 (947 aa).

ATP contacts are provided by residues Gln87, 105 to 109, and Asp525; that span reads GEGKT. Residues 907-937 form a disordered region; it reads DDADKAARDPNRPETWGKVGRNEDCPCNSGK. Residues 908–918 are compositionally biased toward basic and acidic residues; the sequence is DADKAARDPNR. Residues Cys931, Cys933, Cys942, and His943 each coordinate Zn(2+).

The protein belongs to the SecA family. In terms of assembly, monomer and homodimer. Part of the essential Sec protein translocation apparatus which comprises SecA, SecYEG and auxiliary proteins SecDF-YajC and YidC. Zn(2+) is required as a cofactor.

The protein resides in the cell inner membrane. The protein localises to the cytoplasm. The enzyme catalyses ATP + H2O + cellular proteinSide 1 = ADP + phosphate + cellular proteinSide 2.. Part of the Sec protein translocase complex. Interacts with the SecYEG preprotein conducting channel. Has a central role in coupling the hydrolysis of ATP to the transfer of proteins into and across the cell membrane, serving both as a receptor for the preprotein-SecB complex and as an ATP-driven molecular motor driving the stepwise translocation of polypeptide chains across the membrane. This chain is Protein translocase subunit SecA 1, found in Rhodopseudomonas palustris (strain BisA53).